The chain runs to 261 residues: Beta cell expansion factor A (261 aa).

An N-terminal signal peptide occupies residues 1-21 (MNKRNWLLALSLSLAFSPCYA). The segment at 99 to 261 (KTAKEARIAI…IDKDLTETSR (163 aa)) is SYLF domain.

It localises to the secreted. The protein resides in the host. In terms of biological role, stimulates the proliferation of insulin-producing beta cells during development in gnotobiotic zebrafish and mice. BefA is a microbiome-derived protein that traffics from the host intestinal lumen to the pancreas to act directly on pancreatic islets. In pancreas, interacts directly with host beta cells and elicits their proliferation via a mechanism of increasing membrane permeabilization. Can also permeabilize bacterial cell membranes, but does not show killing of target bacteria. In Aeromonas veronii, this protein is Beta cell expansion factor A.